We begin with the raw amino-acid sequence, 355 residues long: Mitochondrial import inner membrane translocase subunit TIM50 (355 aa).

The transit peptide at 1-44 directs the protein to the mitochondrion; the sequence is MAASAAVFLRLRSGLRQGARGLCARLATPPPRAPDQAAEIGSRA. The segment at 25-61 is disordered; that stretch reads RLATPPPRAPDQAAEIGSRAGTKAQTQGPQQQRSSEG. At 45–67 the chain is on the mitochondrial matrix side; that stretch reads GTKAQTQGPQQQRSSEGPSYAKK. The span at 47-61 shows a compositional bias: polar residues; it reads KAQTQGPQQQRSSEG. A helical membrane pass occupies residues 68–88; the sequence is VALWLARLLGAGGTVSVIYIF. The Mitochondrial intermembrane segment spans residues 89 to 355; it reads GNNAVDENGA…SRLWPRSKQP (267 aa). Positions 145–288 constitute an FCP1 homology domain; the sequence is YYQPPYTLVL…LDLSAFLKTI (144 aa). Phosphoserine is present on S343.

The protein belongs to the TIM50 family. In terms of assembly, component of the TIM23 complex at least composed of TIMM23, TIMM17 (TIMM17A or TIMM17B) and TIMM50; within this complex, directly interacts with TIMM23. The complex interacts with the TIMM44 component of the PAM complex and with DNAJC15.

It is found in the mitochondrion inner membrane. Functionally, essential component of the TIM23 complex, a complex that mediates the translocation of transit peptide-containing proteins across the mitochondrial inner membrane. Has some phosphatase activity in vitro; however such activity may not be relevant in vivo. In Bos taurus (Bovine), this protein is Mitochondrial import inner membrane translocase subunit TIM50 (TIMM50).